The chain runs to 206 residues: Uridine kinase (206 aa).

Residue G11–T18 coordinates ATP.

The protein belongs to the uridine kinase family.

The protein localises to the cytoplasm. It catalyses the reaction uridine + ATP = UMP + ADP + H(+). The catalysed reaction is cytidine + ATP = CMP + ADP + H(+). Its pathway is pyrimidine metabolism; CTP biosynthesis via salvage pathway; CTP from cytidine: step 1/3. The protein operates within pyrimidine metabolism; UMP biosynthesis via salvage pathway; UMP from uridine: step 1/1. The protein is Uridine kinase of Lactococcus lactis subsp. lactis (strain IL1403) (Streptococcus lactis).